The following is a 383-amino-acid chain: Acetylornithine deacetylase (383 aa).

Position 80 (histidine 80) interacts with Zn(2+). Aspartate 82 is a catalytic residue. Aspartate 112 contributes to the Zn(2+) binding site. The active site involves glutamate 144. Zn(2+) contacts are provided by glutamate 145, glutamate 169, and histidine 355.

This sequence belongs to the peptidase M20A family. ArgE subfamily. In terms of assembly, homodimer. Zn(2+) is required as a cofactor. It depends on Co(2+) as a cofactor. Requires glutathione as cofactor.

The protein localises to the cytoplasm. It catalyses the reaction N(2)-acetyl-L-ornithine + H2O = L-ornithine + acetate. It functions in the pathway amino-acid biosynthesis; L-arginine biosynthesis; L-ornithine from N(2)-acetyl-L-ornithine (linear): step 1/1. Catalyzes the hydrolysis of the amide bond of N(2)-acetylated L-amino acids. Cleaves the acetyl group from N-acetyl-L-ornithine to form L-ornithine, an intermediate in L-arginine biosynthesis pathway, and a branchpoint in the synthesis of polyamines. The chain is Acetylornithine deacetylase from Klebsiella pneumoniae (strain 342).